The sequence spans 23 residues: Elongation factor Tu (23 aa).

Belongs to the GTP-binding elongation factor family. EF-Tu/EF-1A subfamily. As to quaternary structure, monomer. Post-translationally, the N-terminus is blocked. In terms of processing, the C-terminus may be subjected to proteolysis.

It is found in the cytoplasm. Its function is as follows. This protein promotes the GTP-dependent binding of aminoacyl-tRNA to the A-site of ribosomes during protein biosynthesis. This chain is Elongation factor Tu (tuf), found in Delftia acidovorans (Pseudomonas acidovorans).